Here is a 394-residue protein sequence, read N- to C-terminus: MLSSFNEWFWQDRFWLPPNVTWTELEDRDGRVYPHPQDLLAALPLALVLLAMRLAFERFIGLPLSRWLGVRDQTRRQVKPNATLEKHFLTEGHRPKEPQLSLLAAQCGLTLQQTQRWFRRRRNQDRPQLTKKFCEASWRFLFYLSSFVGGLSVLYHESWLWAPVMCWDRYPNQTLKPSLYWWYLLELGFYLSLLIRLPFDVKRKDFKEQVIHHFVAVILMTFSYSANLLRIGSLVLLLHDSSDYLLEACKMVNYMQYQQVCDALFLIFSFVFFYTRLVLFPTQILYTTYYESISNRGPFFGYYFFNGLLMLLQLLHVFWSCLILRMLYSFMKKGQMEKDIRSDVEESDSSEEAAAAQEPLQLKNGAAGGPRPAPTDGPRSRVAGRLTNRHTTAT.

Residues 1–31 (MLSSFNEWFWQDRFWLPPNVTWTELEDRDGR) lie on the Lumenal side of the membrane. Asparagine 19 carries an N-linked (GlcNAc...) asparagine glycan. The helical transmembrane segment at 32-52 (VYPHPQDLLAALPLALVLLAM) threads the bilayer. A homeobox-like region spans residues 67-128 (WLGVRDQTRR…RRRRNQDRPQ (62 aa)). In terms of domain architecture, TLC spans 131–332 (KKFCEASWRF…ILRMLYSFMK (202 aa)). The next 4 helical transmembrane spans lie at 140-160 (FLFYLSSFVGGLSVLYHESWL), 179-199 (LYWWYLLELGFYLSLLIRLPF), 209-229 (QVIHHFVAVILMTFSYSANLL), and 260-280 (VCDALFLIFSFVFFYTRLVLF). Positions 291 to 301 (ESISNRGPFFG) match the Last loop motif motif. Residues 304–324 (FFNGLLMLLQLLHVFWSCLIL) form a helical membrane-spanning segment. Topologically, residues 325–394 (RMLYSFMKKG…RLTNRHTTAT (70 aa)) are cytoplasmic. Residues 341–394 (RSDVEESDSSEEAAAAQEPLQLKNGAAGGPRPAPTDGPRSRVAGRLTNRHTTAT) are disordered. Serine 342, serine 349, and serine 350 each carry phosphoserine.

Post-translationally, phosphorylated at the C-terminus by CK2. N-glycosylated.

It is found in the endoplasmic reticulum membrane. It catalyses the reaction sphinganine + octadecanoyl-CoA = N-(octadecanoyl)-sphinganine + CoA + H(+). The enzyme catalyses eicosanoyl-CoA + sphinganine = N-eicosanoylsphinganine + CoA + H(+). The catalysed reaction is docosanoyl-CoA + sphinganine = N-docosanoylsphinganine + CoA + H(+). It carries out the reaction tetracosanoyl-CoA + sphinganine = N-tetracosanoylsphinganine + CoA + H(+). It catalyses the reaction hexacosanoyl-CoA + sphinganine = N-hexacosanoylsphinganine + CoA + H(+). The enzyme catalyses a fatty acyl-CoA + sphing-4-enine = an N-acylsphing-4-enine + CoA + H(+). The catalysed reaction is sphing-4-enine + octadecanoyl-CoA = N-octadecanoylsphing-4-enine + CoA + H(+). It carries out the reaction hexadecasphinganine + octadecanoyl-CoA = N-octadecanoylhexadecasphinganine + CoA + H(+). Its pathway is lipid metabolism; sphingolipid metabolism. Functionally, ceramide synthase that catalyzes formation of ceramide from sphinganine and acyl-CoA substrates, with high selectivity toward long and very-long chains (C18:0-C22:0) as acyl donor. This chain is Ceramide synthase 4, found in Homo sapiens (Human).